An 837-amino-acid polypeptide reads, in one-letter code: Telomere length regulation protein TEL2 homolog (837 aa).

An N-acetylmethionine modification is found at methionine 1. Proline 374, proline 419, and proline 422 each carry hydroxyproline. Residues 444–472 form a disordered region; that stretch reads QPAGDGASEAGTSLVPATAEPPAETPAEI. Serine 456 is modified (phosphoserine). Positions 459–471 are enriched in low complexity; that stretch reads PATAEPPAETPAE. Position 485 is a phosphoserine; by CK2 (serine 485). Phosphoserine is present on residues serine 487 and serine 491. Positions 627 to 651 are disordered; sequence GCLGRTPQPGSPSPNTPCLPEAAVS. Phosphoserine occurs at positions 688 and 836.

It belongs to the TEL2 family. As to quaternary structure, component of the TTT complex composed of TELO2, TTI1 and TTI2. Interacts with ATM, ATR, MTOR, PRKDC, RUVBL2, TTI1, TTI2, SMG1 and TRRAP. Component of the mTORC1 and mTORC2 complexes. Interacts (phosphorylated form) with PIH1D1 which mediates interaction of TELO2 with the R2TP complex composed of RUVBL1, RUVBL2, PIH1D1, and RPAP3. In terms of processing, hydroxylation by PHD3 is required for a proper interaction with ATR, and activation of the ATR/CHK1/p53 pathway following DNA damage. Post-translationally, phosphorylated at Ser-485 by CK2 following growth factor deprivation, leading to its subsequent ubiquitination by the SCF(FBXO9) complex. Phosphorylation by CK2 only takes place when TELO2 is bound to mTORC1, not mTORC2; leading to selective ubiquitination of mTORC1-associated protein. Ubiquitinated by the SCF(FBXO9) complex following phosphorylation by CK2 in response to growth factor deprivation, leading to its degradation by the proteasome. Only mTORC1-associated protein is ubiquitinated and degraded, leading to selective inactivation of mTORC1 to restrain cell growth and protein translation, while mTORC2 is activated due to the relief of feedback inhibition by mTORC1.

The protein resides in the cytoplasm. It localises to the membrane. It is found in the nucleus. The protein localises to the chromosome. Its subcellular location is the telomere. In terms of biological role, regulator of the DNA damage response (DDR). Part of the TTT complex that is required to stabilize protein levels of the phosphatidylinositol 3-kinase-related protein kinase (PIKK) family proteins. The TTT complex is involved in the cellular resistance to DNA damage stresses, like ionizing radiation (IR), ultraviolet (UV) and mitomycin C (MMC). Together with the TTT complex and HSP90 may participate in the proper folding of newly synthesized PIKKs. Promotes assembly, stabilizes and maintains the activity of mTORC1 and mTORC2 complexes, which regulate cell growth and survival in response to nutrient and hormonal signals. May be involved in telomere length regulation. The polypeptide is Telomere length regulation protein TEL2 homolog (TELO2) (Homo sapiens (Human)).